Reading from the N-terminus, the 277-residue chain is Carbonyl reductase [NADPH] 1 (277 aa).

An N-acetylserine modification is found at Ser-2. Ser-2 and Ser-30 each carry phosphoserine. NADP(+) contacts are provided by residues Val-10 to Val-34, Asp-63 to Ile-64, and Asn-90. Glutathione contacts are provided by residues Phe-95–Val-97 and Gln-106. Ser-140 contributes to the substrate binding site. Glutathione is bound at residue Ala-193–Tyr-194. Tyr-194 acts as the Proton acceptor in catalysis. Residues Tyr-194–Lys-198 and Val-231–Thr-233 contribute to the NADP(+) site. Lys-239 bears the N6-1-carboxyethyl lysine mark.

This sequence belongs to the short-chain dehydrogenases/reductases (SDR) family. As to quaternary structure, monomer.

It localises to the cytoplasm. The enzyme catalyses a secondary alcohol + NADP(+) = a ketone + NADPH + H(+). It carries out the reaction prostaglandin F2alpha + NADP(+) = prostaglandin E2 + NADPH + H(+). It catalyses the reaction prostaglandin E1 + NADP(+) = 15-oxoprostaglandin E1 + NADPH + H(+). The catalysed reaction is menadione + NADPH + H(+) = menadiol + NADP(+). The enzyme catalyses prostaglandin D2 + NADP(+) = 15-oxoprostaglandin D2 + NADPH + H(+). It carries out the reaction prostaglandin E2 + NADP(+) = 15-oxoprostaglandin E2 + NADPH + H(+). It catalyses the reaction prostaglandin F2alpha + NADP(+) = 15-oxoprostaglandin F2alpha + NADPH + H(+). The catalysed reaction is daunorubicin + NADPH + H(+) = 13-dihydrodaunorubicin + NADP(+). The enzyme catalyses S-nitrosoglutathione + NADPH + H(+) = S-(hydroxysulfenamide)glutathione + NADP(+). It carries out the reaction a primary alcohol + NADP(+) = an aldehyde + NADPH + H(+). It catalyses the reaction cortisol + NADPH + H(+) = 20beta-dihydrocortisol + NADP(+). The catalysed reaction is corticosterone + NADPH + H(+) = 20beta-dihydrocorticosterone + NADP(+). Functionally, NADPH-dependent reductase with broad substrate specificity. Catalyzes the reduction of a wide variety of carbonyl compounds including quinones, prostaglandins, menadione, plus various xenobiotics. Catalyzes the reduction of the antitumor anthracyclines doxorubicin and daunorubicin to the cardiotoxic compounds doxorubicinol and daunorubicinol. Can convert prostaglandin E to prostaglandin F2-alpha. Can bind glutathione, which explains its higher affinity for glutathione-conjugated substrates. Catalyzes the reduction of S-nitrosoglutathione. In addition, participates in the glucocorticoid metabolism by catalyzing the NADPH-dependent cortisol/corticosterone into 20beta-dihydrocortisol (20b-DHF) or 20beta-corticosterone (20b-DHB), which are weak agonists of NR3C1 and NR3C2 in adipose tissue. The protein is Carbonyl reductase [NADPH] 1 of Pongo abelii (Sumatran orangutan).